We begin with the raw amino-acid sequence, 424 residues long: Phosphoribosylamine--glycine ligase (424 aa).

In terms of domain architecture, ATP-grasp spans 111–312 (KAFVKECGIK…LLDLCLATAK (202 aa)). Residue 137–189 (IQNASFPLVIKALNKNTSIVYQEEEAIKILEDAFKQSNEPVIIEPFLEGFELS) participates in ATP binding.

Belongs to the GARS family.

The catalysed reaction is 5-phospho-beta-D-ribosylamine + glycine + ATP = N(1)-(5-phospho-beta-D-ribosyl)glycinamide + ADP + phosphate + H(+). Its pathway is purine metabolism; IMP biosynthesis via de novo pathway; N(1)-(5-phospho-D-ribosyl)glycinamide from 5-phospho-alpha-D-ribose 1-diphosphate: step 2/2. The sequence is that of Phosphoribosylamine--glycine ligase (purD) from Helicobacter pylori (strain ATCC 700392 / 26695) (Campylobacter pylori).